A 673-amino-acid polypeptide reads, in one-letter code: Mechanosensitive ion channel protein 2, chloroplastic (673 aa).

The transit peptide at 1–75 (MALYGTLQLS…SVPCRTTAFR (75 aa)) directs the protein to the chloroplast. The next 5 helical transmembrane spans lie at 107–127 (FPFVYKLVPAVALLVFSLWGL), 152–172 (YHVMTSYVQPLLLWLGALFIC), 193–213 (LNFVRSLSTVLAFAYCLSSLI), 240–260 (ALYSAVWVAAVSLFMELLGFS), and 264–284 (WLTAGGLGTVLITLAGREILT). Positions 492-673 (KINGEDKSKS…QPNSGASTEP (182 aa)) are disordered. Basic and acidic residues-rich tracts occupy residues 510-525 (AEQENKGSNPKSKETS), 564-576 (TPKDTETSGTEKP), and 617-642 (GSKRTLPIEEEIHSPPMETDAKELTG). Residue serine 571 is modified to Phosphoserine. Residues 661-673 (SQSQPNSGASTEP) show a composition bias toward polar residues.

It belongs to the MscS (TC 1.A.23) family. In terms of tissue distribution, widely expressed.

Its subcellular location is the plastid. It is found in the chloroplast membrane. Mechanosensitive channel that opens in response to stretch forces in the membrane lipid bilayer. Controls plastid size, shape, and perhaps division during normal plant development by altering ion flux in response to changes in membrane tension. Acts as a component of the chloroplast division machinery. The sequence is that of Mechanosensitive ion channel protein 2, chloroplastic (MSL2) from Arabidopsis thaliana (Mouse-ear cress).